Reading from the N-terminus, the 528-residue chain is GMP synthase [glutamine-hydrolyzing] (528 aa).

The Glutamine amidotransferase type-1 domain maps to 13–204 (SILILDFGSQ…VYSISKCKAD (192 aa)). C90 (nucleophile) is an active-site residue. Catalysis depends on residues H178 and E180. Positions 205 to 403 (WNTETFLEET…LGLPDEIIKR (199 aa)) constitute a GMPS ATP-PPase domain. 232–238 (SGGVDSS) contacts ATP.

Homodimer.

The catalysed reaction is XMP + L-glutamine + ATP + H2O = GMP + L-glutamate + AMP + diphosphate + 2 H(+). It participates in purine metabolism; GMP biosynthesis; GMP from XMP (L-Gln route): step 1/1. Functionally, catalyzes the synthesis of GMP from XMP. In Prochlorococcus marinus (strain MIT 9515), this protein is GMP synthase [glutamine-hydrolyzing].